The sequence spans 170 residues: Pollen-specific protein C13 (170 aa).

A signal peptide spans methionine 1–alanine 27. Cystine bridges form between cysteine 43–cysteine 114, cysteine 46–cysteine 155, and cysteine 67–cysteine 102. Residue asparagine 53 is glycosylated (N-linked (GlcNAc...) asparagine).

It belongs to the Ole e I family. In terms of tissue distribution, pollen.

This Zea mays (Maize) protein is Pollen-specific protein C13 (MGS1).